Here is a 64-residue protein sequence, read N- to C-terminus: Long neurotoxin MS2 (64 aa).

5 disulfides stabilise this stretch: Cys-3-Cys-24, Cys-6-Cys-11, Cys-17-Cys-41, Cys-45-Cys-57, and Cys-58-Cys-63.

The protein belongs to the three-finger toxin family. Ancestral subfamily. As to expression, expressed by the venom gland.

It localises to the secreted. Produces peripheral paralysis by blocking neuromuscular transmission at the postsynaptic site. Very weak inhibitor of the endogenous nicotinic acetylcholine receptors (nAChR) in the human rhabdomyosarcoma TE 671 cell line. Not toxic to mice by intraperitoneal injection or to zebrafish by injection at the back of the dorsolateral region. The polypeptide is Long neurotoxin MS2 (Micrurus surinamensis (Surinam coral snake)).